A 39-amino-acid chain; its full sequence is Photosystem II reaction center protein L (39 aa).

The helical transmembrane segment at 18 to 38 (SLYLGLLLVAVLGILFSSYFF) threads the bilayer.

The protein belongs to the PsbL family. In terms of assembly, PSII is composed of 1 copy each of membrane proteins PsbA, PsbB, PsbC, PsbD, PsbE, PsbF, PsbH, PsbI, PsbJ, PsbK, PsbL, PsbM, PsbT, PsbX, PsbY, PsbZ, Psb30/Ycf12, peripheral proteins PsbO, CyanoQ (PsbQ), PsbU, PsbV and a large number of cofactors. It forms dimeric complexes.

The protein resides in the cellular thylakoid membrane. In terms of biological role, one of the components of the core complex of photosystem II (PSII). PSII is a light-driven water:plastoquinone oxidoreductase that uses light energy to abstract electrons from H(2)O, generating O(2) and a proton gradient subsequently used for ATP formation. It consists of a core antenna complex that captures photons, and an electron transfer chain that converts photonic excitation into a charge separation. This subunit is found at the monomer-monomer interface and is required for correct PSII assembly and/or dimerization. This Rippkaea orientalis (strain PCC 8801 / RF-1) (Cyanothece sp. (strain PCC 8801)) protein is Photosystem II reaction center protein L.